A 1380-amino-acid polypeptide reads, in one-letter code: DNA-directed RNA polymerase subunit beta (1380 aa).

The protein belongs to the RNA polymerase beta chain family. As to quaternary structure, the RNAP catalytic core consists of 2 alpha, 1 beta, 1 beta' and 1 omega subunit. When a sigma factor is associated with the core the holoenzyme is formed, which can initiate transcription.

The catalysed reaction is RNA(n) + a ribonucleoside 5'-triphosphate = RNA(n+1) + diphosphate. Its function is as follows. DNA-dependent RNA polymerase catalyzes the transcription of DNA into RNA using the four ribonucleoside triphosphates as substrates. This Ehrlichia canis (strain Jake) protein is DNA-directed RNA polymerase subunit beta.